We begin with the raw amino-acid sequence, 262 residues long: Apolipoprotein A-I-2 (262 aa).

The signal sequence occupies residues 1-18 (MQFLALALTILLAAATQA). The tract at residues 32–63 (VKVAMMEYMAQVKETAQRSIDHLDDTEYKEYK) is 3 X approximate tandem repeats. A run of 2 repeats spans residues 64 to 85 (VQLSQSLDNLQQYAQTASESLA) and 87 to 107 (YSEAIGVQLTEATAAVRAEVM). Residues 64-262 (VQLSQSLDNL…YETISQAMKA (199 aa)) are 10 X approximate tandem repeats. The 3; half-length repeat unit spans residues 108 to 118 (KDVEELRSQLE). 5 consecutive repeat copies span residues 119–140 (PKRAELKEVLDKHIDEYRKRLE), 141–162 (PLIKDIVEQRRTELEAFRVKIE), 163–184 (PVVEEMRAKVSANVEETKAKLM), 185–206 (PIVETVRAKLTERLEELRTLAS), and 207–228 (PYAEEYKEQMVKAVGEVREKVV). One copy of the 9; half-length repeat lies at 229–239 (PLTTDFKGQLG). Copy 10 of the repeat occupies 240-262 (PAAEQAKEKLMALYETISQAMKA).

It belongs to the apolipoprotein A1/A4/E family.

It is found in the secreted. In terms of biological role, participates in the reverse transport of cholesterol from tissues to the liver for excretion by promoting cholesterol efflux from tissues and by acting as a cofactor for the lecithin cholesterol acyltransferase (LCAT). This chain is Apolipoprotein A-I-2, found in Oncorhynchus mykiss (Rainbow trout).